Reading from the N-terminus, the 352-residue chain is Putative squamosa promoter-binding-like protein 19 (352 aa).

The interval 68-88 is disordered; the sequence is AAAPATRRARGGSGGGGGGGG. Over residues 78–88 the composition is skewed to gly residues; that stretch reads GGSGGGGGGGG. The SBP-type zinc-finger motif lies at 90–167; sequence AEACSVDGCR…DGHNRRRRKP (78 aa). Cys-93, Cys-98, Cys-115, His-118, Cys-134, Cys-137, His-141, and Cys-153 together coordinate Zn(2+). The Bipartite nuclear localization signal signature appears at 150-166; it reads KKSCRKRLDGHNRRRRK. Positions 152-174 are disordered; it reads SCRKRLDGHNRRRRKPQHDALNP.

It localises to the nucleus. Trans-acting factor that binds specifically to the consensus nucleotide sequence 5'-TNCGTACAA-3'. The sequence is that of Putative squamosa promoter-binding-like protein 19 (SPL19) from Oryza sativa subsp. japonica (Rice).